Here is a 738-residue protein sequence, read N- to C-terminus: Glycogen [starch] synthase, muscle (738 aa).

Ser-8 is subject to Phosphoserine; by AMPK and PKA. Ser-11 is subject to Phosphoserine. A UDP-binding site is contributed by Lys-39. UDP-alpha-D-glucose is bound by residues His-205 and Arg-211. Alpha-D-glucose 6-phosphate is bound by residues His-291, Glu-292, Gln-294, His-297, and Lys-301. Arg-331 contacts UDP. Residue Arg-331 participates in UDP-alpha-D-glucose binding. Phosphoserine is present on Ser-412. Residue His-501 coordinates alpha-D-glucose 6-phosphate. UDP-alpha-D-glucose contacts are provided by Glu-510, Trp-512, and Gly-513. Thr-515 provides a ligand contact to UDP. Alpha-D-glucose 6-phosphate-binding residues include Arg-582 and Arg-586. The segment at 632–738 (QGYRYPRPAS…PTSSLGEERN (107 aa)) is disordered. The residue at position 641 (Ser-641) is a Phosphoserine; by DYRK2, GSK3-alpha, GSK3-beta and PASK. A phosphoserine mark is found at Ser-645, Ser-649, Ser-652, Ser-653, Ser-657, and Ser-672. Acidic residues predominate over residues 658–681 (EDEEEPRDGPLGEDSERYDEEEEA). Basic and acidic residues predominate over residues 682–695 (AKDRRNIRAPEWPR). A phosphoserine mark is found at Ser-698, Ser-709, and Ser-711. Over residues 698–738 (SCSSSTGGSKRSNSVDTGPSSSLSTPTEPLSPTSSLGEERN) the composition is skewed to low complexity. A phosphothreonine mark is found at Thr-722 and Thr-724. Phosphoserine is present on residues Ser-728 and Ser-732.

This sequence belongs to the glycosyltransferase 3 family. As to quaternary structure, part of the GYS1-GYG1 complex, a heterooctamer composed of a tetramer of GYS1 and 2 dimers of GYG1, where each GYS1 protomer binds to one GYG1 subunit (via GYG1 C-terminus); the GYS1 tetramer may dissociate from GYG1 dimers to continue glycogen polymerization on its own. In terms of processing, primed phosphorylation at Ser-657 (site 5) by CSNK2A1 and CSNK2A2 is required for inhibitory phosphorylation at Ser-641 (site 3a), Ser-645 (site 3b), Ser-649 (site 3c) and Ser-653 (site 4) by GSK3A an GSK3B. Phosphorylated at Ser-641 by PASK, leading to inactivation; phosphorylation by PASK is inhibited by glycogen. Phosphorylated at Ser-641 by DYRK2, leading to inactivation. Dephosphorylation at Ser-641 and Ser-645 by PP1 activates the enzyme. Phosphorylation at Ser-8 by AMPK inactivates the enzyme activity.

The enzyme catalyses [(1-&gt;4)-alpha-D-glucosyl](n) + UDP-alpha-D-glucose = [(1-&gt;4)-alpha-D-glucosyl](n+1) + UDP + H(+). The protein operates within glycan biosynthesis; glycogen biosynthesis. Its activity is regulated as follows. Allosteric activation by glucose-6-phosphate. Phosphorylation reduces the activity towards UDP-glucose. When in the non-phosphorylated state, glycogen synthase does not require glucose-6-phosphate as an allosteric activator; when phosphorylated it does. Glycogen synthase participates in the glycogen biosynthetic process along with glycogenin and glycogen branching enzyme. Extends the primer composed of a few glucose units formed by glycogenin by adding new glucose units to it. In this context, glycogen synthase transfers the glycosyl residue from UDP-Glc to the non-reducing end of alpha-1,4-glucan. In Mus musculus (Mouse), this protein is Glycogen [starch] synthase, muscle (Gys1).